Here is a 113-residue protein sequence, read N- to C-terminus: MSIEVRKSIFPSLPIIVFIVFVEVPVLSVIYPLIEVLTIYPLLISLIFSLAVFAYKFQKSEKNLKRLARQIMALFVIFWLLSQITMVVAVESEYHGIVSFRRDIYNAQLSCKG.

3 helical membrane passes run 9–31 (IFPS…SVIY), 36–58 (VLTI…YKFQ), and 71–90 (IMAL…VVAV).

Its subcellular location is the cell membrane. This is an uncharacterized protein from Archaeoglobus fulgidus (strain ATCC 49558 / DSM 4304 / JCM 9628 / NBRC 100126 / VC-16).